The following is a 164-amino-acid chain: Vasopressin-neurophysin 2-copeptin (164 aa).

The signal sequence occupies residues 1-19; the sequence is MPDTMLPACFLGLLAFSSA. Cysteines 20 and 25 form a disulfide. At Gly28 the chain carries Glycine amide. 7 cysteine pairs are disulfide-bonded: Cys41–Cys85, Cys44–Cys58, Cys52–Cys75, Cys59–Cys65, Cys92–Cys104, Cys98–Cys116, and Cys105–Cys110. N-linked (GlcNAc...) asparagine glycosylation is present at Asn131.

The protein belongs to the vasopressin/oxytocin family. In terms of assembly, interacts with vasopressin receptors V1bR/AVPR1B (Ki=85 pM), V1aR/AVPR1A (Ki=0.6 nM) and V2R/AVPR2 (Ki=4.9 nM). Interacts with oxytocin receptor (OXTR) (Ki=110 nM). (Microbial infection) May interact with SARS coronavirus-2/SARS-CoV-2; they may form a complex with secreted ACE2.

It is found in the secreted. Its function is as follows. Specifically binds vasopressin. Has a direct antidiuretic action on the kidney, it also causes vasoconstriction of the peripheral vessels. Acts by binding to vasopressin receptors (V1bR/AVPR1B, V1aR/AVPR1A, and V2R/AVPR2). This chain is Vasopressin-neurophysin 2-copeptin (AVP), found in Homo sapiens (Human).